The primary structure comprises 424 residues: 26S proteasome regulatory subunit 4 homolog (424 aa).

Over residues 1 to 11 the composition is skewed to basic and acidic residues; it reads MSRDKSERDNL. Residues 1–33 form a disordered region; it reads MSRDKSERDNLQDTTTINLRRRRRVKEGKAASK. 210 to 217 serves as a coordination point for ATP; that stretch reads GLPGTGKT.

The protein belongs to the AAA ATPase family. In terms of assembly, the 26S proteasome consists of a 20S proteasome core and two 19S regulatory subunits. The 20S proteasome core is composed of 28 subunits that are arranged in four stacked rings, resulting in a barrel-shaped structure. The two end rings are each formed by seven alpha subunits, and the two central rings are each formed by seven beta subunits. The catalytic chamber with the active sites is on the inside of the barrel.

Its subcellular location is the cytoplasm. It localises to the nucleus. In terms of biological role, acts as a regulatory subunit of the 26S proteasome which degrades poly-ubiquitinated proteins in the cytoplasm and in the nucleus. It is essential for the regulated turnover of proteins and for the removal of misfolded proteins. The proteasome is a multicatalytic proteinase complex that is characterized by its ability to cleave peptides with Arg, Phe, Tyr, Leu, and Glu adjacent to the leaving group at neutral or slightly basic pH. The sequence is that of 26S proteasome regulatory subunit 4 homolog (RPT2) from Encephalitozoon cuniculi (strain GB-M1) (Microsporidian parasite).